The chain runs to 304 residues: Small ribosomal subunit protein uS3 (304 aa).

Residues 17-86 (MDEYFAKQLS…NPQIDAQEVK (70 aa)) form the KH type-2 domain.

It belongs to the universal ribosomal protein uS3 family. Part of the 30S ribosomal subunit.

Binds the lower part of the 30S subunit head. This chain is Small ribosomal subunit protein uS3, found in Methanococcoides burtonii (strain DSM 6242 / NBRC 107633 / OCM 468 / ACE-M).